The chain runs to 105 residues: MFEGFDFSKMGEVLEKAKEQAAALEAESLNKEFGAKSGGGLVSVKANGKGEILDITIDDSLLEDKESLQILLISAINDVLKMAEDDKKAIAGRMLGGLGDFGFKG.

This sequence belongs to the YbaB/EbfC family. Homodimer.

It is found in the cytoplasm. The protein localises to the nucleoid. Functionally, binds to DNA and alters its conformation. May be involved in regulation of gene expression, nucleoid organization and DNA protection. This is Nucleoid-associated protein Ccur92_18190 from Campylobacter curvus (strain 525.92).